An 804-amino-acid polypeptide reads, in one-letter code: ABC transporter aclQ (804 aa).

A run of 9 helical transmembrane segments spans residues 3–23 (LAVL…ISYL), 52–72 (FTAI…SITI), 97–117 (IAVF…PFSP), 119–139 (LSHS…LAMF), 155–175 (LQLG…ALYF), 206–226 (HGGW…LWPS), 239–259 (FVLL…LGIV), 349–369 (LVFQ…YFLI), and 373–393 (AFYS…TIYM). One can recognise an ABC transmembrane type-1 domain in the interval 236-518 (IFCFVLLVIQ…FGSFYTQVQN (283 aa)). N-linked (GlcNAc...) asparagine glycosylation occurs at asparagine 460. 2 helical membrane-spanning segments follow: residues 464–484 (NLLF…QISA) and 489–509 (VAMF…LNFF). The 235-residue stretch at 552–786 (VEFTHVNFAY…NGMYSQMWAK (235 aa)) folds into the ABC transporter domain. 585 to 592 (GESGSGKS) provides a ligand contact to ATP. N-linked (GlcNAc...) asparagine glycans are attached at residues asparagine 639 and asparagine 797.

Belongs to the ABC transporter superfamily. ABCB family. Heavy Metal importer (TC 3.A.1.210) subfamily.

The protein localises to the membrane. Its function is as follows. ABC transporter; part of the gene cluster that mediates the biosynthesis of aspirochlorine (or antibiotic A30641), an unusual halogenated spiro compound with distinctive antifungal properties due to selective inhibition of protein biosynthesis, and which is also active against bacteria, viruses, and murine tumor cells. This Aspergillus oryzae (strain ATCC 42149 / RIB 40) (Yellow koji mold) protein is ABC transporter aclQ.